A 35-amino-acid chain; its full sequence is Dermonecrotic toxin LgSicTox-beta-LOXN4 (35 aa).

Mg(2+) is bound at residue D20.

It belongs to the arthropod phospholipase D family. Class II subfamily. The cofactor is Mg(2+). In terms of processing, contains 2 disulfide bonds. In terms of tissue distribution, expressed by the venom gland.

The protein resides in the secreted. It carries out the reaction an N-(acyl)-sphingosylphosphocholine = an N-(acyl)-sphingosyl-1,3-cyclic phosphate + choline. The enzyme catalyses an N-(acyl)-sphingosylphosphoethanolamine = an N-(acyl)-sphingosyl-1,3-cyclic phosphate + ethanolamine. The catalysed reaction is a 1-acyl-sn-glycero-3-phosphocholine = a 1-acyl-sn-glycero-2,3-cyclic phosphate + choline. It catalyses the reaction a 1-acyl-sn-glycero-3-phosphoethanolamine = a 1-acyl-sn-glycero-2,3-cyclic phosphate + ethanolamine. Its function is as follows. Dermonecrotic toxins cleave the phosphodiester linkage between the phosphate and headgroup of certain phospholipids (sphingolipid and lysolipid substrates), forming an alcohol (often choline) and a cyclic phosphate. This toxin acts on sphingomyelin (SM). It may also act on ceramide phosphoethanolamine (CPE), lysophosphatidylcholine (LPC) and lysophosphatidylethanolamine (LPE), but not on lysophosphatidylserine (LPS), and lysophosphatidylglycerol (LPG). It acts by transphosphatidylation, releasing exclusively cyclic phosphate products as second products. Induces dermonecrosis, hemolysis, increased vascular permeability, edema, inflammatory response, and platelet aggregation. This chain is Dermonecrotic toxin LgSicTox-beta-LOXN4, found in Loxosceles gaucho (Spider).